Here is a 485-residue protein sequence, read N- to C-terminus: MELYQLTIHELQNKIRQGGVTSTAIVNSVFGRIDAVEENVHSYITLMRESALEEAQKADEQIRTGEINALTGIPVALKDIYCTRGVRTTCGSLILDNFIPPYDATVVVKLREAGAVFTGKTNMDEFAMGSSTETSYYGFTRNPWDLERIPGGSSGGSAAAVAADECIAALGSDTGGSIRQPAALCGVVGMKPTYGRVSRFGLIAFASSLDQIGPFTKDVEDCAILLNVIAGYDLRDSTSVPVDVPDYRDYLNRGIEGWTVGIPKEYFIEGIDPEVRGAIEQAIRTVEGLGARCREISLPHTDYCVAVYYIIAPAEASSNLARYDGVKYGFRAADCRDLLDMYKKTRSAGFGTEVKRRVMLGTYSLSSGYYDAYYKKASQVRGLIKRDFEEALKDCNVILTPTTPTPAFTIGEKTDDPMQMYLSDIFTISANLAGIPGISVPCGYTQSGLPVGIQFLAGHFEEGKLLQIASAYERNAHIEKRRPIL.

Catalysis depends on charge relay system residues K78 and S153. S177 functions as the Acyl-ester intermediate in the catalytic mechanism.

The protein belongs to the amidase family. GatA subfamily. In terms of assembly, heterotrimer of A, B and C subunits.

It carries out the reaction L-glutamyl-tRNA(Gln) + L-glutamine + ATP + H2O = L-glutaminyl-tRNA(Gln) + L-glutamate + ADP + phosphate + H(+). Allows the formation of correctly charged Gln-tRNA(Gln) through the transamidation of misacylated Glu-tRNA(Gln) in organisms which lack glutaminyl-tRNA synthetase. The reaction takes place in the presence of glutamine and ATP through an activated gamma-phospho-Glu-tRNA(Gln). In Syntrophus aciditrophicus (strain SB), this protein is Glutamyl-tRNA(Gln) amidotransferase subunit A.